The chain runs to 337 residues: 5-formaminoimidazole-4-carboxamide-1-(beta)-D-ribofuranosyl 5'-monophosphate synthetase (337 aa).

5-amino-1-(5-phospho-beta-D-ribosyl)imidazole-4-carboxamide is bound by residues histidine 14 and serine 74. The ATP-grasp domain occupies 81–328; it reads VELVERMKVP…IAREIRLAIE (248 aa). ATP is bound by residues 125 to 185 and glutamate 207; that span reads PDDI…VPVY. Asparagine 235 contacts 5-amino-1-(5-phospho-beta-D-ribosyl)imidazole-4-carboxamide. Positions 273 and 286 each coordinate Mg(2+).

This sequence belongs to the phosphohexose mutase family. Mg(2+) serves as cofactor. The cofactor is Mn(2+).

The enzyme catalyses 5-amino-1-(5-phospho-beta-D-ribosyl)imidazole-4-carboxamide + formate + ATP = 5-formamido-1-(5-phospho-D-ribosyl)imidazole-4-carboxamide + ADP + phosphate. It functions in the pathway purine metabolism; IMP biosynthesis via de novo pathway; 5-formamido-1-(5-phospho-D-ribosyl)imidazole-4-carboxamide from 5-amino-1-(5-phospho-D-ribosyl)imidazole-4-carboxamide (formate route): step 1/1. Its function is as follows. Catalyzes the ATP- and formate-dependent formylation of 5-aminoimidazole-4-carboxamide-1-beta-d-ribofuranosyl 5'-monophosphate (AICAR) to 5-formaminoimidazole-4-carboxamide-1-beta-d-ribofuranosyl 5'-monophosphate (FAICAR) in the absence of folates. The polypeptide is 5-formaminoimidazole-4-carboxamide-1-(beta)-D-ribofuranosyl 5'-monophosphate synthetase (Pyrococcus abyssi (strain GE5 / Orsay)).